The following is a 342-amino-acid chain: Dihydroorotase (342 aa).

Positions 13 and 15 each coordinate Zn(2+). Substrate is bound by residues 15-17 and Asn41; that span reads HLR. 3 residues coordinate Zn(2+): Lys97, His134, and His172. Lys97 carries the N6-carboxylysine modification. His134 contacts substrate. Substrate is bound at residue Leu217. A Zn(2+)-binding site is contributed by Asp245. Residue Asp245 is part of the active site. Substrate is bound by residues His249 and Ala261.

Belongs to the metallo-dependent hydrolases superfamily. DHOase family. Class II DHOase subfamily. Homodimer. It depends on Zn(2+) as a cofactor.

The catalysed reaction is (S)-dihydroorotate + H2O = N-carbamoyl-L-aspartate + H(+). It participates in pyrimidine metabolism; UMP biosynthesis via de novo pathway; (S)-dihydroorotate from bicarbonate: step 3/3. Its function is as follows. Catalyzes the reversible cyclization of carbamoyl aspartate to dihydroorotate. The polypeptide is Dihydroorotase (Shewanella amazonensis (strain ATCC BAA-1098 / SB2B)).